The primary structure comprises 124 residues: U33-theraphotoxin-Cg1c (124 aa).

The N-terminal stretch at 1–17 (MKFAVAIAFTLLVCVFA) is a signal peptide. Cystine bridges form between Cys26-Cys37, Cys31-Cys51, Cys36-Cys75, Cys61-Cys83, and Cys77-Cys94. Basic and acidic residues predominate over residues 93-108 (RCQEESGKSDKSKESQ). Residues 93–124 (RCQEESGKSDKSKESQGSDESEESEESKESSG) form a disordered region. Acidic residues predominate over residues 109-118 (GSDESEESEE).

The protein belongs to the neurotoxin 32 family. Expressed by the venom gland.

The protein resides in the secreted. This chain is U33-theraphotoxin-Cg1c, found in Chilobrachys guangxiensis (Chinese earth tiger tarantula).